We begin with the raw amino-acid sequence, 562 residues long: Formate--tetrahydrofolate ligase (562 aa).

71 to 78 (TPAGEGKS) serves as a coordination point for ATP.

The protein belongs to the formate--tetrahydrofolate ligase family.

It carries out the reaction (6S)-5,6,7,8-tetrahydrofolate + formate + ATP = (6R)-10-formyltetrahydrofolate + ADP + phosphate. The protein operates within one-carbon metabolism; tetrahydrofolate interconversion. The sequence is that of Formate--tetrahydrofolate ligase from Bacillus cereus (strain ATCC 14579 / DSM 31 / CCUG 7414 / JCM 2152 / NBRC 15305 / NCIMB 9373 / NCTC 2599 / NRRL B-3711).